A 236-amino-acid chain; its full sequence is Pyridoxine 5'-phosphate synthase (236 aa).

Asparagine 6 serves as a coordination point for 3-amino-2-oxopropyl phosphate. 8–9 is a 1-deoxy-D-xylulose 5-phosphate binding site; the sequence is DH. Arginine 17 lines the 3-amino-2-oxopropyl phosphate pocket. Residue histidine 42 is the Proton acceptor of the active site. 2 residues coordinate 1-deoxy-D-xylulose 5-phosphate: arginine 44 and histidine 49. Catalysis depends on glutamate 69, which acts as the Proton acceptor. Threonine 99 contributes to the 1-deoxy-D-xylulose 5-phosphate binding site. Residue histidine 190 is the Proton donor of the active site. 3-amino-2-oxopropyl phosphate is bound by residues glycine 191 and 212–213; that span reads GH.

It belongs to the PNP synthase family. Homooctamer; tetramer of dimers.

It localises to the cytoplasm. The catalysed reaction is 3-amino-2-oxopropyl phosphate + 1-deoxy-D-xylulose 5-phosphate = pyridoxine 5'-phosphate + phosphate + 2 H2O + H(+). The protein operates within cofactor biosynthesis; pyridoxine 5'-phosphate biosynthesis; pyridoxine 5'-phosphate from D-erythrose 4-phosphate: step 5/5. In terms of biological role, catalyzes the complicated ring closure reaction between the two acyclic compounds 1-deoxy-D-xylulose-5-phosphate (DXP) and 3-amino-2-oxopropyl phosphate (1-amino-acetone-3-phosphate or AAP) to form pyridoxine 5'-phosphate (PNP) and inorganic phosphate. This is Pyridoxine 5'-phosphate synthase from Chloroherpeton thalassium (strain ATCC 35110 / GB-78).